The sequence spans 1601 residues: MTDLNSESFSALNFWKSVEKKNISTNFQGTKVVAPSKKINSFPLLAPPAPPPPPTEQEINIGSGNSTFISSNNNNSNNNNNNNSNNNNNNNLNNSNNNNNNLNSNNNNNNNNNNNNNNGNNNNNSNFLTRQDSSTQKEWDEQNVTEAFGFWKQKAVQLQKETERYNARRNARQTIDLTNILRKSTSSDLLIKPPVESPPLTPVGQDDEGEQQQQQQQQKQSSPSTPSNDTDTETTAAAVTTTTTTTTTTTTSTTTTTTETVLQANQLEIKYGGETIAVVDDSGTTPRDYRRSRSISCEIIPKINGVITTSPQRVTTTTTTTTPSTGGVVVADEESDSSEEESDSSEEESDEYTDEESETELQVVSNATPRRSDDFTPTIVESPPLTSVNSNDNTSSGTVVAPIDLNSSTGGNTGSQQPPQPSSQQQKPDQASENTAVAASSISATTNVTSAASTTTVAPDSIINTKDVTVVSSTLTTTTSATSSTTSATTQSIPAPPSPSQQRAAQSISTSSVTPAAITKPTKDAKDKKDPAKKSIGATLTRTVTKTFIRDSKENNKVPTGTSPPVSSSTSISSSTGIKKDKVKLSKEEKDRIKKEKSAKKKKEKDEKKQQKTNKKALTKNNSSTDVKKGFVSPQQQQILDSPYRIYGVRLTQLVLSNDGDLPAILTQTITVLSNSNKLDVNSVFVGAENEPAVREIRKRSDLERIDFSIIGDPRVVAGLLILFFAELPQPLFNSKFFGDLVEINDITNPQVKLNDLKQLINSLSQLRRSLLQILVTFFTSKYINGNSVTTRAIAIQSIAQSFGPQFFRGTSSSDSDIQVGIETLKLIIDNYVFLFEKTNEPDVKYKNIDGKMIISEGSIDKLIDKATDQYYPYNEKYFSLTFFITHLFFIQPHELADKLITLYRENLDTLETKKKWKKHRRSKKASFINEAVKLWVDYCYKEMREDKELSKKILKGFPHLEAQLASRLSHRTTINDFLKLPKRVHSRTRSASFSDTLLSTGGIGSTSGGIGGGVNNCLLSAMEIAEQCTLVDYDLFTNVRLSDWVRLVQGSVDPQTAPSLSLALKRSTIWAQWAMGEILSTEDKSQRVAIINLLVDVAINCKDLANFNTAISIHTALTNHHIKRLQQTWDSVPKETLNKITQLEQSLQVWLKPDATNPFGVICQSINSACVPNFSILRTILSQIDQKIPTFSNDGSMVNVEKLRTIFGIVVEIQRLQQQRNYTMKPTKLFIQLQDINTVSMDELADLSLKCEPPVSKAKKYNAPADIVDEDWRLKITKTFNKPLATTSVGIDLPRLASSFTFNTTGHKTTPEEKSAYGNKIQDIFHVLVSLAQIESSELETDVREKFTTYIPMSTDPDSDFKRELLKFLDEVCHADNSKLVRVLKCCNQAIIAPVIIEITLNIAKGVPFMDAGGWRILISNINNSNNSVILDKIDEINEDSSNVEKEKLSSSQEQQEQQEQKQQEQQQQQQEPQPLFIRHYKKQRSRSAQSKDFFEFEWFIQLNLDADCKNILSFDLKISNLVFSTDTSPNIRDQLLESFKSYLVSQECVQYINFNENKQPVAAPVTPATTIVTTKEESTTVTSSTTTVVQESVPSTNAE.

4 disordered regions span residues P43 to D140, D188 to T256, S310 to S461, and L475 to G630. Residues L45–T55 show a composition bias toward pro residues. The segment covering Q57–I69 has biased composition (polar residues). The segment covering S70–N126 has biased composition (low complexity). S197 carries the phosphoserine modification. A Phosphothreonine modification is found at T201. Composition is skewed to low complexity over residues Q211–T256 and S310–V330. Positions A331–T359 are enriched in acidic residues. Residues P384–T398 are compositionally biased toward polar residues. Composition is skewed to low complexity over residues T435–A458, L475–I493, and S500–K520. Over residues P521–K533 the composition is skewed to basic and acidic residues. Low complexity predominate over residues V558–G577. Residues I578–E596 are compositionally biased toward basic and acidic residues. A Rho-GAP domain is found at V649–F836. Residues G851–K983 form the N-terminal Ras-GEF domain. The Ras-GEF domain occupies S1021–P1255. Residues Y1262 to E1601 are N-terminal F-actin-binding domain. Residues S1443–P1474 are disordered. Over residues Q1465–P1474 the composition is skewed to low complexity.

In terms of assembly, interacts with gpaB and rapA. Interacts directly with F-actin. Simultaneously phosphorylated at Ser-197 and Thr-201 after cAMP stimulation.

It localises to the cytoplasm. The protein localises to the cell cortex. The protein resides in the cytoskeleton. Its subcellular location is the cell projection. It is found in the filopodium. It localises to the lamellipodium. Its function is as follows. GpaB-activated, rapA-specific guanine nucleotide exchange factor, involved in the regulation of the balance between Ras and Rap signaling at the leading edge of chemotaxing cells. Spatially localized activation of Rap and Ras induces F-actin polymerization at the leading edge of chemotaxing cells through the Rac, PI3K, and TORC2 pathways. Also acts as a key regulator of actin-driven membrane protrusions during processes such as phagocytosis and cytokinesis, possibly by modulating rapA signaling pathways. This Dictyostelium discoideum (Social amoeba) protein is Ras guanine nucleotide exchange factor glfB.